The following is a 243-amino-acid chain: Venom nerve growth factor (243 aa).

The N-terminal stretch at 1–18 (MSMLCYTLIIAFLIGIWA) is a signal peptide. A propeptide spanning residues 19–125 (APKSEDNVPL…TLNRNIWANN (107 aa)) is cleaved from the precursor. Residues 47 to 66 (GLKTSRNTDQHHPTPKKSED) show a composition bias toward basic and acidic residues. The disordered stretch occupies residues 47-70 (GLKTSRNTDQHHPTPKKSEDQELG). 3 disulfides stabilise this stretch: cysteine 139-cysteine 204, cysteine 182-cysteine 232, and cysteine 192-cysteine 234. A glycan (N-linked (GlcNAc...) asparagine) is linked at asparagine 148.

It belongs to the NGF-beta family. In terms of assembly, homodimer. In terms of tissue distribution, expressed by the venom gland.

The protein resides in the secreted. Nerve growth factor is important for the development and maintenance of the sympathetic and sensory nervous systems. It stimulates division and differentiation of sympathetic and embryonic sensory neurons as well as basal forebrain cholinergic neurons in the brain. Its relevance in the snake venom is not clear. However, it has been shown to inhibit metalloproteinase-dependent proteolysis of platelet glycoprotein Ib alpha, suggesting a metalloproteinase inhibition to prevent metalloprotease autodigestion and/or protection against prey proteases. Binds a lipid between the two protein chains in the homodimer. The lipid-bound form promotes histamine relase from mouse mast cells, contrary to the lipid-free form. The polypeptide is Venom nerve growth factor (Bungarus multicinctus (Many-banded krait)).